The sequence spans 458 residues: uncharacterized protein (458 aa).

This is an uncharacterized protein from Bacillus subtilis (strain 168).